Reading from the N-terminus, the 123-residue chain is Small ribosomal subunit protein uS12 (123 aa).

Residue Asp89 is modified to 3-methylthioaspartic acid.

This sequence belongs to the universal ribosomal protein uS12 family. Part of the 30S ribosomal subunit. Contacts proteins S8 and S17. May interact with IF1 in the 30S initiation complex.

Its function is as follows. With S4 and S5 plays an important role in translational accuracy. Functionally, interacts with and stabilizes bases of the 16S rRNA that are involved in tRNA selection in the A site and with the mRNA backbone. Located at the interface of the 30S and 50S subunits, it traverses the body of the 30S subunit contacting proteins on the other side and probably holding the rRNA structure together. The combined cluster of proteins S8, S12 and S17 appears to hold together the shoulder and platform of the 30S subunit. The protein is Small ribosomal subunit protein uS12 of Syntrophotalea carbinolica (strain DSM 2380 / NBRC 103641 / GraBd1) (Pelobacter carbinolicus).